We begin with the raw amino-acid sequence, 786 residues long: MNRTAPMKQRSVPLSSIMPSEEQSDGFIDLDRLVAAVFRRARLVAAFVVLFIALGAAYLLFATPYYTSMTQILLDENLSKYAEEEPTPVNSQMLDTQIASAVEILKSGELALRVVDKLKLSENDTILNPPRSPVDMVKEWLKTATGLFSGGPDVTEEAARNGRRQKAAAIIQQSLAVERVSRSSVVAVAFRSSDPLLAATIARGYASAYLTDQLNANFEATERASVWLQERLTDLQQRSQAAALEVAHFRAENGLTAARGELMSEQQMADLNSQLIVAQADTASASARYDQYKSIVDQGPENAVKNATISSKEGDNSVIRDLRTRYLTVGKREREVSDNFGADHPQAVSLRAEQEDVARQIYQELQQLTASYKNEYEVAQSREESLRKSIQGIAGKTSDASEQLVQLRELEQKAAALKTLYESYLGRYEQATQQQSFPIAKARVISEAGVPVSPSSPKKTMTLALSAVLGMMVGGAYAAFLEFRERTFRLEGNIRSILGHRSLGYVPLLGTRMKKKAQLVHAHFGSVKRHDEAVDDTMPFQRLSRIVVDAPRSTFAETFRNAKLACDQMLAGSESRVIAIASALPDEGKSIIAANFAALLAASGKRTLLIDADIRKPGLTQMITPAPRTGLVETLIGEASWPAGIKVDQRTKLAILPAGGASHQRHQSNELLASPAMANLIENARNAFDYVVVDLAALAPVVDAKAFAPLADGILFVVEWGRTPSRLVRDLLHSEPLINSKVLGVILNKTDMNELGKYSDFDGAEKYRHRYGKYYVENTITENTAA.

The Cytoplasmic segment spans residues 1 to 42 (MNRTAPMKQRSVPLSSIMPSEEQSDGFIDLDRLVAAVFRRAR). The chain crosses the membrane as a helical span at residues 43–66 (LVAAFVVLFIALGAAYLLFATPYY). Residues 67–689 (TSMTQILLDE…LIENARNAFD (623 aa)) lie on the Periplasmic side of the membrane. Residue 583-590 (ALPDEGKS) participates in ATP binding. The helical transmembrane segment at 690–711 (YVVVDLAALAPVVDAKAFAPLA) threads the bilayer. The Cytoplasmic segment spans residues 712–786 (DGILFVVEWG…ENTITENTAA (75 aa)).

This sequence to B.solanacearum EpsB.

It localises to the cell membrane. It participates in glycan metabolism; exopolysaccharide biosynthesis. This chain is Succinoglycan biosynthesis transport protein ExoP (exoP), found in Rhizobium meliloti (strain 1021) (Ensifer meliloti).